Reading from the N-terminus, the 194-residue chain is Imidazoleglycerol-phosphate dehydratase (194 aa).

It belongs to the imidazoleglycerol-phosphate dehydratase family.

It localises to the cytoplasm. It carries out the reaction D-erythro-1-(imidazol-4-yl)glycerol 3-phosphate = 3-(imidazol-4-yl)-2-oxopropyl phosphate + H2O. It functions in the pathway amino-acid biosynthesis; L-histidine biosynthesis; L-histidine from 5-phospho-alpha-D-ribose 1-diphosphate: step 6/9. In Lacticaseibacillus casei (strain BL23) (Lactobacillus casei), this protein is Imidazoleglycerol-phosphate dehydratase.